A 246-amino-acid polypeptide reads, in one-letter code: NAD-dependent protein deacylase (246 aa).

The Deacetylase sirtuin-type domain occupies 1-245; the sequence is MKEFITKHRD…ELIREILDNP (245 aa). 20–39 is a binding site for NAD(+); sequence GAGISAESGIPTFRGSEGLW. Residues Tyr-64 and Arg-67 each contribute to the substrate site. NAD(+) is bound at residue 98 to 101; that stretch reads QNVD. His-116 (proton acceptor) is an active-site residue. Cys-124, Cys-127, Cys-146, and Cys-149 together coordinate Zn(2+). Residues 186-188, 212-214, and Thr-230 contribute to the NAD(+) site; these read GTS and NPE.

Belongs to the sirtuin family. Class III subfamily. The cofactor is Zn(2+).

The protein resides in the cytoplasm. The catalysed reaction is N(6)-acetyl-L-lysyl-[protein] + NAD(+) + H2O = 2''-O-acetyl-ADP-D-ribose + nicotinamide + L-lysyl-[protein]. It catalyses the reaction N(6)-succinyl-L-lysyl-[protein] + NAD(+) + H2O = 2''-O-succinyl-ADP-D-ribose + nicotinamide + L-lysyl-[protein]. Functionally, NAD-dependent lysine deacetylase and desuccinylase that specifically removes acetyl and succinyl groups on target proteins. Modulates the activities of several proteins which are inactive in their acylated form. This chain is NAD-dependent protein deacylase, found in Leptospira interrogans serogroup Icterohaemorrhagiae serovar Lai (strain 56601).